We begin with the raw amino-acid sequence, 252 residues long: MADSVLRIGGREFGSRLIMGTGGAPNLSVLEEALIASGTELTTVAMRRVDAETGTGVLDLLNRLGIAALPNTAGCRGAAEAVLTAQLAREALGTDMVKLEVIADERTLLPDAVELVKAAEQLVDDGFTVLPYTNDDPVLARRLEDIGCAAVMPLGSPIGTGLGISNPHNIEMIVAAAGVPVVLDAGIGTASDAALAMELGCDAVLLATAVTRASDPPTMAAAMASAVTAGHLARQAGRIPKRFWAQASSPAL.

Lysine 98 acts as the Schiff-base intermediate with DXP in catalysis. 1-deoxy-D-xylulose 5-phosphate is bound by residues glycine 159, 185–186 (AG), and 207–208 (AT).

The protein belongs to the ThiG family. As to quaternary structure, homotetramer. Forms heterodimers with either ThiH or ThiS.

Its subcellular location is the cytoplasm. The enzyme catalyses [ThiS sulfur-carrier protein]-C-terminal-Gly-aminoethanethioate + 2-iminoacetate + 1-deoxy-D-xylulose 5-phosphate = [ThiS sulfur-carrier protein]-C-terminal Gly-Gly + 2-[(2R,5Z)-2-carboxy-4-methylthiazol-5(2H)-ylidene]ethyl phosphate + 2 H2O + H(+). Its pathway is cofactor biosynthesis; thiamine diphosphate biosynthesis. Functionally, catalyzes the rearrangement of 1-deoxy-D-xylulose 5-phosphate (DXP) to produce the thiazole phosphate moiety of thiamine. Sulfur is provided by the thiocarboxylate moiety of the carrier protein ThiS. In vitro, sulfur can be provided by H(2)S. The polypeptide is Thiazole synthase (Mycolicibacterium smegmatis (strain ATCC 700084 / mc(2)155) (Mycobacterium smegmatis)).